The primary structure comprises 203 residues: Imidazoleglycerol-phosphate dehydratase (203 aa).

It belongs to the imidazoleglycerol-phosphate dehydratase family.

Its subcellular location is the cytoplasm. The enzyme catalyses D-erythro-1-(imidazol-4-yl)glycerol 3-phosphate = 3-(imidazol-4-yl)-2-oxopropyl phosphate + H2O. It functions in the pathway amino-acid biosynthesis; L-histidine biosynthesis; L-histidine from 5-phospho-alpha-D-ribose 1-diphosphate: step 6/9. In Synechococcus sp. (strain RCC307), this protein is Imidazoleglycerol-phosphate dehydratase.